The following is a 485-amino-acid chain: N-succinylglutamate 5-semialdehyde dehydrogenase (485 aa).

220–225 (GSANTG) serves as a coordination point for NAD(+). Catalysis depends on residues Glu-243 and Cys-278.

Belongs to the aldehyde dehydrogenase family. AstD subfamily.

It carries out the reaction N-succinyl-L-glutamate 5-semialdehyde + NAD(+) + H2O = N-succinyl-L-glutamate + NADH + 2 H(+). It participates in amino-acid degradation; L-arginine degradation via AST pathway; L-glutamate and succinate from L-arginine: step 4/5. Functionally, catalyzes the NAD-dependent reduction of succinylglutamate semialdehyde into succinylglutamate. This Aliivibrio salmonicida (strain LFI1238) (Vibrio salmonicida (strain LFI1238)) protein is N-succinylglutamate 5-semialdehyde dehydrogenase.